Consider the following 514-residue polypeptide: 2,3-bisphosphoglycerate-independent phosphoglycerate mutase (514 aa).

Residues Asp-13 and Ser-69 each coordinate Mn(2+). Residue Ser-69 is the Phosphoserine intermediate of the active site. Substrate is bound by residues His-128, 158–159 (RD), Arg-189, Arg-195, 263–266 (RADR), and Lys-336. Residues Asp-402, His-406, Asp-443, His-444, and His-461 each contribute to the Mn(2+) site.

This sequence belongs to the BPG-independent phosphoglycerate mutase family. Monomer. Mn(2+) is required as a cofactor.

It catalyses the reaction (2R)-2-phosphoglycerate = (2R)-3-phosphoglycerate. It participates in carbohydrate degradation; glycolysis; pyruvate from D-glyceraldehyde 3-phosphate: step 3/5. Its function is as follows. Catalyzes the interconversion of 2-phosphoglycerate and 3-phosphoglycerate. This chain is 2,3-bisphosphoglycerate-independent phosphoglycerate mutase, found in Akkermansia muciniphila (strain ATCC BAA-835 / DSM 22959 / JCM 33894 / BCRC 81048 / CCUG 64013 / CIP 107961 / Muc).